Here is a 456-residue protein sequence, read N- to C-terminus: Probable multidrug resistance protein NorM (456 aa).

Helical transmembrane passes span 13–34, 54–76, 95–117, 132–154, 161–183, 193–215, 244–266, 286–308, 321–343, 358–380, 387–409, and 414–436; these read QFLT…MTFF, SSFW…PIIA, LYIA…PTIL, HFLN…RSFI, RVTM…CFIF, GAGS…VILI, IGVP…TILM, LLYA…ETGA, GMAA…RDII, MHFL…VLGA, VTVT…GYGL, and LGPF…ILSI.

The protein belongs to the multi antimicrobial extrusion (MATE) (TC 2.A.66.1) family.

It is found in the cell membrane. Its function is as follows. Multidrug efflux pump. This is Probable multidrug resistance protein NorM (norM) from Listeria monocytogenes serotype 4b (strain F2365).